The following is a 145-amino-acid chain: Sporulation-specific cell division protein Francci3_3418 (145 aa).

Belongs to the SsgA family.

The protein localises to the cell septum. In terms of biological role, involved in sporulation-specific cell division. This is Sporulation-specific cell division protein Francci3_3418 from Frankia casuarinae (strain DSM 45818 / CECT 9043 / HFP020203 / CcI3).